Reading from the N-terminus, the 594-residue chain is Acyl-coenzyme A thioesterase 11 (594 aa).

The transit peptide at 1–20 (MIQNVGNHLRRGFASMFSNR) directs the protein to the mitochondrion. 2 positions are modified to phosphoserine: serine 15 and serine 25. Residues 20 to 43 (RTSRKSISHPESGDPPTMAEGEGY) are disordered. The 113-residue stretch at 45-157 (NPTEVQMSQL…LATFVAHREL (113 aa)) folds into the HotDog ACOT-type 1 domain. CoA-binding positions include 93–95 (TAS), 122–124 (NSS), arginine 183, and 272–274 (HFR). The HotDog ACOT-type 2 domain occupies 217-330 (EKTRVESVEL…FMTFVVLDKD (114 aa)). Residues 370 to 582 (KQAEVALSVP…FKACESFLLD (213 aa)) form the START domain.

The protein resides in the mitochondrion matrix. Its subcellular location is the cytoplasm. It carries out the reaction hexadecanoyl-CoA + H2O = hexadecanoate + CoA + H(+). The enzyme catalyses tetradecanoyl-CoA + H2O = tetradecanoate + CoA + H(+). It catalyses the reaction dodecanoyl-CoA + H2O = dodecanoate + CoA + H(+). The catalysed reaction is butanoyl-CoA + H2O = butanoate + CoA + H(+). The protein operates within lipid metabolism; fatty acid metabolism. In terms of biological role, has an acyl-CoA thioesterase activity with a preference for the long chain fatty acyl-CoA thioesters hexadecanoyl-CoA/palmitoyl-CoA and tetradecanoyl-CoA/myristoyl-CoA which are the main substrates in the mitochondrial beta-oxidation pathway. In Mus musculus (Mouse), this protein is Acyl-coenzyme A thioesterase 11 (Acot11).